The sequence spans 788 residues: Glucan 1,3-beta-glucosidase (788 aa).

Positions 1 to 42 (MRFSSLLACLGAVGIQAAAIPFQRRVDNTTDSGSLDAAQAAA) are cleaved as a signal peptide. N-linked (GlcNAc...) asparagine glycosylation is found at Asn28, Asn233, Asn381, and Asn773.

It belongs to the glycosyl hydrolase 55 family.

The catalysed reaction is Successive hydrolysis of beta-D-glucose units from the non-reducing ends of (1-&gt;3)-beta-D-glucans, releasing alpha-glucose.. The polypeptide is Glucan 1,3-beta-glucosidase (EXG1) (Cochliobolus carbonum (Maize leaf spot fungus)).